Consider the following 341-residue polypeptide: General L-amino acid-binding periplasmic protein AapJ (341 aa).

The signal sequence occupies residues 1-23 (MKNKLLSAAIGAAVLAVGASAAS).

It belongs to the bacterial solute-binding protein 3 family. The complex is composed of two ATP-binding proteins (AapP), two transmembrane proteins (AapM and AapQ) and a solute-binding protein (AapJ).

Its subcellular location is the periplasm. In terms of biological role, part of the ABC transporter complex AapJQMP involved in uptake of L-amino acids. Affects the efflux of these amino acids as well. Essential for the development of bacteroids, the differentiated legume-symbiotic forms of this bacterium, and for the effective N(2) fixation by them. The chain is General L-amino acid-binding periplasmic protein AapJ (aapJ) from Rhizobium johnstonii (strain DSM 114642 / LMG 32736 / 3841) (Rhizobium leguminosarum bv. viciae).